Here is a 433-residue protein sequence, read N- to C-terminus: Gamma-glutamyl phosphate reductase (433 aa).

The protein belongs to the gamma-glutamyl phosphate reductase family.

The protein resides in the cytoplasm. The catalysed reaction is L-glutamate 5-semialdehyde + phosphate + NADP(+) = L-glutamyl 5-phosphate + NADPH + H(+). The protein operates within amino-acid biosynthesis; L-proline biosynthesis; L-glutamate 5-semialdehyde from L-glutamate: step 2/2. Its function is as follows. Catalyzes the NADPH-dependent reduction of L-glutamate 5-phosphate into L-glutamate 5-semialdehyde and phosphate. The product spontaneously undergoes cyclization to form 1-pyrroline-5-carboxylate. The protein is Gamma-glutamyl phosphate reductase of Psychrobacter cryohalolentis (strain ATCC BAA-1226 / DSM 17306 / VKM B-2378 / K5).